The primary structure comprises 421 residues: Testin (421 aa).

The 108-residue stretch at 92-199 (MILTNPVAAK…GDVKLPREMD (108 aa)) folds into the PET domain. A disordered region spans residues 133–164 (EKQPVAGSEGAQYRKKQLAKQLPAHDQDPSKC). Residues 155–164 (PAHDQDPSKC) are compositionally biased toward basic and acidic residues. 3 consecutive LIM zinc-binding domains span residues 234–297 (YSCY…CDSE), 299–359 (PRCA…NHAV), and 362–421 (QGCH…KMMS).

This sequence belongs to the prickle / espinas / testin family. As to quaternary structure, interacts via LIM domain 1 with ZYX. Interacts (via LIM domain 3) with ENAH and VASP. Interacts with ALKBH4, talin, actin, alpha-actinin, GRIP1 and PXN. Interacts (via LIM domain 2) with ACTL7A (via N-terminus). Heterodimer with ACTL7A; the heterodimer interacts with ENAH to form a heterotrimer.

It is found in the cytoplasm. The protein resides in the cell junction. It localises to the focal adhesion. Functionally, scaffold protein that may play a role in cell adhesion, cell spreading and in the reorganization of the actin cytoskeleton. Plays a role in the regulation of cell proliferation. May act as a tumor suppressor. The chain is Testin (TES) from Mustela putorius furo (European domestic ferret).